The chain runs to 174 residues: I-Kappa-B like protein C1 (174 aa).

ANK repeat units follow at residues 56–88 (RGRQ…DINA) and 93–123 (TGNS…NLGA).

The protein belongs to the polydnaviridae I-Kappa-B-like protein family.

Its function is as follows. Suppresses the host immune response through NF-kappa-B inactivation. Possesses ankyrin repeat domains required for NF-kappa-B binding but lacks the regulatory regions required for dissociation from NF-kappa-B and degradation. Therefore, prevents host NF-kappa-B release and subsequent activation. The chain is I-Kappa-B like protein C1 (C1) from Microplitis demolitor bracovirus (isolate Webb) (MdBV).